Consider the following 252-residue polypeptide: Pyridoxine 5'-phosphate synthase (252 aa).

Asn-12 is a binding site for 3-amino-2-oxopropyl phosphate. Residue 14–15 (DH) participates in 1-deoxy-D-xylulose 5-phosphate binding. Arg-23 provides a ligand contact to 3-amino-2-oxopropyl phosphate. The active-site Proton acceptor is His-48. Arg-50 and His-55 together coordinate 1-deoxy-D-xylulose 5-phosphate. Glu-75 serves as the catalytic Proton acceptor. Thr-105 lines the 1-deoxy-D-xylulose 5-phosphate pocket. Residue His-199 is the Proton donor of the active site. 3-amino-2-oxopropyl phosphate contacts are provided by residues Gly-200 and 221 to 222 (GH).

Belongs to the PNP synthase family. As to quaternary structure, homooctamer; tetramer of dimers.

It localises to the cytoplasm. It carries out the reaction 3-amino-2-oxopropyl phosphate + 1-deoxy-D-xylulose 5-phosphate = pyridoxine 5'-phosphate + phosphate + 2 H2O + H(+). The protein operates within cofactor biosynthesis; pyridoxine 5'-phosphate biosynthesis; pyridoxine 5'-phosphate from D-erythrose 4-phosphate: step 5/5. Its function is as follows. Catalyzes the complicated ring closure reaction between the two acyclic compounds 1-deoxy-D-xylulose-5-phosphate (DXP) and 3-amino-2-oxopropyl phosphate (1-amino-acetone-3-phosphate or AAP) to form pyridoxine 5'-phosphate (PNP) and inorganic phosphate. This chain is Pyridoxine 5'-phosphate synthase, found in Cereibacter sphaeroides (strain ATCC 17029 / ATH 2.4.9) (Rhodobacter sphaeroides).